A 136-amino-acid polypeptide reads, in one-letter code: ATP synthase epsilon chain (136 aa).

The protein belongs to the ATPase epsilon chain family. F-type ATPases have 2 components, CF(1) - the catalytic core - and CF(0) - the membrane proton channel. CF(1) has five subunits: alpha(3), beta(3), gamma(1), delta(1), epsilon(1). CF(0) has three main subunits: a, b and c.

It localises to the cell membrane. Functionally, produces ATP from ADP in the presence of a proton gradient across the membrane. This chain is ATP synthase epsilon chain, found in Ureaplasma urealyticum serovar 10 (strain ATCC 33699 / Western).